The primary structure comprises 203 residues: GTP cyclohydrolase-2 (203 aa).

49–53 (RIHSE) lines the GTP pocket. Zn(2+) contacts are provided by C54, C65, and C67. GTP-binding positions include Q70, 92–94 (EGR), and T114. The active-site Proton acceptor is the D126. R128 functions as the Nucleophile in the catalytic mechanism. GTP contacts are provided by T149 and K154.

It belongs to the GTP cyclohydrolase II family. It depends on Zn(2+) as a cofactor.

It carries out the reaction GTP + 4 H2O = 2,5-diamino-6-hydroxy-4-(5-phosphoribosylamino)-pyrimidine + formate + 2 phosphate + 3 H(+). The protein operates within cofactor biosynthesis; riboflavin biosynthesis; 5-amino-6-(D-ribitylamino)uracil from GTP: step 1/4. In terms of biological role, catalyzes the conversion of GTP to 2,5-diamino-6-ribosylamino-4(3H)-pyrimidinone 5'-phosphate (DARP), formate and pyrophosphate. The protein is GTP cyclohydrolase-2 of Shewanella sp. (strain ANA-3).